The sequence spans 98 residues: NADH-ubiquinone oxidoreductase chain 4L (98 aa).

3 helical membrane-spanning segments follow: residues 2 to 22 (PSISINITLAFTMALTGMLVF), 29 to 49 (SLLCLEGMMLSMFILSILFIM), and 61 to 81 (ILLLVLAACEAAIGLALLVMV).

The protein belongs to the complex I subunit 4L family. In terms of assembly, core subunit of respiratory chain NADH dehydrogenase (Complex I) which is composed of 45 different subunits.

It is found in the mitochondrion inner membrane. The catalysed reaction is a ubiquinone + NADH + 5 H(+)(in) = a ubiquinol + NAD(+) + 4 H(+)(out). In terms of biological role, core subunit of the mitochondrial membrane respiratory chain NADH dehydrogenase (Complex I) which catalyzes electron transfer from NADH through the respiratory chain, using ubiquinone as an electron acceptor. Part of the enzyme membrane arm which is embedded in the lipid bilayer and involved in proton translocation. This chain is NADH-ubiquinone oxidoreductase chain 4L (MT-ND4L), found in Lepilemur mitsinjoensis (Mitsinjo sportive lemur).